A 74-amino-acid polypeptide reads, in one-letter code: MKSDIHPDYHFIKVVMTDGSEYTTRSTYGKEGDTLQLDIDPRTHPAWTGGTQQLMDRGGRVSRFKSKFGALLKG.

Belongs to the bacterial ribosomal protein bL31 family. Type A subfamily. Part of the 50S ribosomal subunit.

Functionally, binds the 23S rRNA. This Xanthobacter autotrophicus (strain ATCC BAA-1158 / Py2) protein is Large ribosomal subunit protein bL31.